The primary structure comprises 356 residues: Guanine nucleotide-binding protein alpha-15 subunit (356 aa).

Gly-2 carries the N-myristoyl glycine lipid modification. Cys-5 carries the S-palmitoyl cysteine lipid modification. The G-alpha domain maps to 33 to 356 (GNQKLLLLGT…GRNLRGTGME (324 aa)). A G1 motif region spans residues 36-49 (KLLLLGTGECGKST). Residues 41–48 (GTGECGKS), 177–183 (LRIRIPT), 202–206 (DVGGQ), 271–274 (NKRD), and Ala-328 contribute to the GTP site. Residues Ser-48 and Thr-183 each coordinate Mg(2+). A G2 motif region spans residues 175–183 (DMLRIRIPT). Residues 198-207 (FRIFDVGGQR) form a G3 motif region. Residues 267-274 (ILFLNKRD) form a G4 motif region. Residues 326–331 (TCATDT) form a G5 motif region.

The protein belongs to the G-alpha family. In terms of assembly, g proteins are composed of 3 units; alpha, beta and gamma. The alpha chain contains the guanine nucleotide binding site.

Functionally, guanine nucleotide-binding proteins (G proteins) are involved as modulators or transducers in various transmembrane signaling systems. The chain is Guanine nucleotide-binding protein alpha-15 subunit (gpa-15) from Caenorhabditis briggsae.